A 397-amino-acid chain; its full sequence is Tryptophan synthase beta chain 1 (397 aa).

N6-(pyridoxal phosphate)lysine is present on K90.

It belongs to the TrpB family. As to quaternary structure, tetramer of two alpha and two beta chains. It depends on pyridoxal 5'-phosphate as a cofactor.

It carries out the reaction (1S,2R)-1-C-(indol-3-yl)glycerol 3-phosphate + L-serine = D-glyceraldehyde 3-phosphate + L-tryptophan + H2O. It functions in the pathway amino-acid biosynthesis; L-tryptophan biosynthesis; L-tryptophan from chorismate: step 5/5. The beta subunit is responsible for the synthesis of L-tryptophan from indole and L-serine. The polypeptide is Tryptophan synthase beta chain 1 (trpB1) (Aquifex aeolicus (strain VF5)).